Reading from the N-terminus, the 66-residue chain is uncharacterized protein (66 aa).

In terms of domain architecture, HTH cro/C1-type spans 5–59 (VKELRARFGYSQEKLGETVGVTRQTVAAIEKGDYVPSLLLALKICKAFSMKMEDV). A DNA-binding region (H-T-H motif) is located at residues 16–35 (QEKLGETVGVTRQTVAAIEK).

This is an uncharacterized protein from Bacillus subtilis (strain 168).